The primary structure comprises 253 residues: Imidazole glycerol phosphate synthase subunit HisF (253 aa).

Active-site residues include D11 and D130.

Belongs to the HisA/HisF family. In terms of assembly, heterodimer of HisH and HisF.

The protein localises to the cytoplasm. The enzyme catalyses 5-[(5-phospho-1-deoxy-D-ribulos-1-ylimino)methylamino]-1-(5-phospho-beta-D-ribosyl)imidazole-4-carboxamide + L-glutamine = D-erythro-1-(imidazol-4-yl)glycerol 3-phosphate + 5-amino-1-(5-phospho-beta-D-ribosyl)imidazole-4-carboxamide + L-glutamate + H(+). It functions in the pathway amino-acid biosynthesis; L-histidine biosynthesis; L-histidine from 5-phospho-alpha-D-ribose 1-diphosphate: step 5/9. Functionally, IGPS catalyzes the conversion of PRFAR and glutamine to IGP, AICAR and glutamate. The HisF subunit catalyzes the cyclization activity that produces IGP and AICAR from PRFAR using the ammonia provided by the HisH subunit. The protein is Imidazole glycerol phosphate synthase subunit HisF of Geobacter metallireducens (strain ATCC 53774 / DSM 7210 / GS-15).